The chain runs to 228 residues: MIPSTYPNNSTMAAMTARMLLDIRAVHFNTDEPFTHASGLQAPTYIDCRKLISHPRIRSTAMDFLTCKVMRDAGLEAFDNIAGGETAGIPFAAFVAERMALPMSYVRKKPKGYGKTAQIEGEMPEGARVLLVEDLTTDGGSKLKFVDAIRNAGATCAHTAVVFSYGNLPETEANLAAHGLTLHSLTTWADVIAEARRGSDFNEATLTEVERFLSDPGGWRGDRGLNTD.

5-phospho-alpha-D-ribose 1-diphosphate contacts are provided by residues Arg107, Lys108, Lys111, and 133 to 141 (EDLTTDGGS). Residue Thr137 coordinates orotate.

The protein belongs to the purine/pyrimidine phosphoribosyltransferase family. PyrE subfamily. As to quaternary structure, homodimer. It depends on Mg(2+) as a cofactor.

The enzyme catalyses orotidine 5'-phosphate + diphosphate = orotate + 5-phospho-alpha-D-ribose 1-diphosphate. It functions in the pathway pyrimidine metabolism; UMP biosynthesis via de novo pathway; UMP from orotate: step 1/2. Its function is as follows. Catalyzes the transfer of a ribosyl phosphate group from 5-phosphoribose 1-diphosphate to orotate, leading to the formation of orotidine monophosphate (OMP). The polypeptide is Orotate phosphoribosyltransferase (Jannaschia sp. (strain CCS1)).